We begin with the raw amino-acid sequence, 245 residues long: Fibroblast growth factor-binding protein 3 (245 aa).

The N-terminal stretch at 1-28 is a signal peptide; that stretch reads MSPPRPRASLSPLTLLLLLGGCLLSAAG. The segment at 33–52 is disordered; the sequence is AAGREVTRASRPTVGSSGRF. Intrachain disulfides connect cysteine 60–cysteine 81 and cysteine 91–cysteine 125. The segment at 136–216 is disordered; sequence CARKTAGSDL…PAAAGFQPNG (81 aa). A compositionally biased stretch (low complexity) spans 170-180; sequence RSRQSVRSPSS. A disulfide bridge links cysteine 228 with cysteine 236.

It belongs to the fibroblast growth factor-binding protein family. As to quaternary structure, interacts with FGF2. In terms of tissue distribution, in the adult, highly expressed in brain with lower levels in ovary. In the embryo, highest levels are found in the brain and spinal cord at 14 dpc and expression is almost completely restricted to the brain by 18 dpc. In the adult and postnatal brain, highly expressed in the orbitofrontal cortex where it is concentrated primarily in differentiated neurons.

It is found in the secreted. Heparin-binding protein which binds to FGF2, prevents binding of FGF2 to heparin and probably inhibits immobilization of FGF2 on extracellular matrix glycosaminoglycans, allowing its release and subsequent activation of FGFR signaling which leads to increased vascular permeability. The chain is Fibroblast growth factor-binding protein 3 (Fgfbp3) from Mus musculus (Mouse).